A 367-amino-acid chain; its full sequence is Putative F-box protein At3g21120 (367 aa).

The 43-residue stretch at methionine 1–histidine 43 folds into the F-box domain.

This is Putative F-box protein At3g21120 from Arabidopsis thaliana (Mouse-ear cress).